The sequence spans 394 residues: Ribulose bisphosphate carboxylase large chain (394 aa).

N6,N6,N6-trimethyllysine is present on lysine 5. Substrate contacts are provided by asparagine 114 and threonine 164. Lysine 166 serves as the catalytic Proton acceptor. Residue lysine 168 participates in substrate binding. 3 residues coordinate Mg(2+): lysine 192, aspartate 194, and glutamate 195. N6-carboxylysine is present on lysine 192. Histidine 285 acts as the Proton acceptor in catalysis. Residues arginine 286, histidine 318, and serine 370 each coordinate substrate.

The protein belongs to the RuBisCO large chain family. Type I subfamily. In terms of assembly, heterohexadecamer of 8 large chains and 8 small chains; disulfide-linked. The disulfide link is formed within the large subunit homodimers. Requires Mg(2+) as cofactor. The disulfide bond which can form in the large chain dimeric partners within the hexadecamer appears to be associated with oxidative stress and protein turnover.

It localises to the plastid. The protein localises to the chloroplast. It carries out the reaction 2 (2R)-3-phosphoglycerate + 2 H(+) = D-ribulose 1,5-bisphosphate + CO2 + H2O. The enzyme catalyses D-ribulose 1,5-bisphosphate + O2 = 2-phosphoglycolate + (2R)-3-phosphoglycerate + 2 H(+). RuBisCO catalyzes two reactions: the carboxylation of D-ribulose 1,5-bisphosphate, the primary event in carbon dioxide fixation, as well as the oxidative fragmentation of the pentose substrate in the photorespiration process. Both reactions occur simultaneously and in competition at the same active site. In Alisma plantago-aquatica (Common water-plantain), this protein is Ribulose bisphosphate carboxylase large chain (rbcL).